We begin with the raw amino-acid sequence, 451 residues long: MAYPSTSGMIQASSSLHGSITRRNPEGYDMPSDLDQALLLYFDGQEQDKPSTQEEPHKPLNFVKETLNIFPSQPMDGEPTPTPKASMSAPPIAGFSRRSPAPAAADGRPLTLGKTSKAAFKKEGGSGSGGAMAASASSELKGPKTPDPKTLRRLAQNREAARKSRLRKKAYIQQLETGRIRLAHLEQEIQFTRAQGAFCGAGILSPDAALFNLEYERWQEAHHQVISRLRAAVEEHRPDGELQPHVDEAMSHYGVLMAHKARLVGADPLHLLSGLWKGAVEQCFLWIGGFRPSELIKVVVRHVEPLTEQQLAAVYSAQQAARQEEDALDGGLQALLRSLSDVVSSSDAPSSSQQTPPVMYHPSAAAAMAAASFMGQYGSYSNLQLAMDKLANLAIFLRQADEERMRTLHALRRMLTVRQAARCFVAVDDYFGRLRALALFWTTTRPHPAAG.

The segment covering 1-22 (MAYPSTSGMIQASSSLHGSITR) has biased composition (polar residues). Disordered regions lie at residues 1–32 (MAYP…DMPS) and 70–151 (FPSQ…PKTL). The span at 141–150 (KGPKTPDPKT) shows a compositional bias: basic and acidic residues. A bZIP domain is found at 147 to 191 (DPKTLRRLAQNREAARKSRLRKKAYIQQLETGRIRLAHLEQEIQF). Residues 149-169 (KTLRRLAQNREAARKSRLRKK) are basic motif. The tract at residues 175-189 (LETGRIRLAHLEQEI) is leucine-zipper. The DOG1 domain maps to 208–444 (AALFNLEYER…RALALFWTTT (237 aa)).

This sequence belongs to the bZIP family. Interacts with NPR5/NH4, NH5.1 and NH5.2.

Its subcellular location is the nucleus. In terms of biological role, transcriptional regulator involved in defense response. This chain is Transcription factor TGAL8, found in Oryza sativa subsp. japonica (Rice).